The sequence spans 107 residues: uncharacterized protein (107 aa).

Residues leucine 13–tryptophan 68 enclose the HTH cro/C1-type domain. The segment at residues lysine 24–valine 43 is a DNA-binding region (H-T-H motif).

This sequence belongs to the VapA/VapI family.

This is an uncharacterized protein from Haemophilus influenzae (strain ATCC 51907 / DSM 11121 / KW20 / Rd).